The chain runs to 1136 residues: Nuclear pore complex protein Nup133 (1136 aa).

The tract at residues 1–26 is disordered; it reads MFSPRGTPGSGRRQAPRTGGRRSVSA.

It belongs to the nucleoporin Nup133 family. As to quaternary structure, forms part of the Nup160 subcomplex in the nuclear pore which is composed of NUP160, NUP133, NUP107 and Nup96. This complex plays a role in RNA export and in tethering Nup98 and NUP153 to the nucleus. As to expression, widely expressed in the embryo and in adult tissues. Higher expression is observed in the brain, testes, ovary, skin, and kidney.

Its subcellular location is the nucleus. It localises to the nuclear pore complex. The protein localises to the chromosome. It is found in the centromere. The protein resides in the kinetochore. Its function is as follows. Involved in poly(A)+ RNA transport. Involved in nephrogenesis. This chain is Nuclear pore complex protein Nup133, found in Danio rerio (Zebrafish).